Consider the following 437-residue polypeptide: Membrane protein NfeD1b (437 aa).

5 helical membrane-spanning segments follow: residues 2–22 (LQIK…LLGV), 231–251 (WLTN…GLTV), 253–273 (LFSP…LLFF), 288–308 (LLFI…GGII), and 316–336 (IIAS…SLLI).

The protein belongs to the NfeD family.

It localises to the cell membrane. The sequence is that of Membrane protein NfeD1b from Bacillus subtilis (strain 168).